The primary structure comprises 239 residues: Large ribosomal subunit protein uL3 (239 aa).

2 disordered regions span residues 140–166 (SHRS…PGHM) and 211–239 (PLPK…QEGA). Position 151 is an N5-methylglutamine (Gln-151).

The protein belongs to the universal ribosomal protein uL3 family. As to quaternary structure, part of the 50S ribosomal subunit. Forms a cluster with proteins L14 and L19. Post-translationally, methylated by PrmB.

In terms of biological role, one of the primary rRNA binding proteins, it binds directly near the 3'-end of the 23S rRNA, where it nucleates assembly of the 50S subunit. The protein is Large ribosomal subunit protein uL3 of Bradyrhizobium sp. (strain BTAi1 / ATCC BAA-1182).